The following is a 26-amino-acid chain: Ribulose bisphosphate carboxylase large chain (26 aa).

The propeptide occupies 1 to 2 (MS). Position 3 is an N-acetylproline (P3).

It belongs to the RuBisCO large chain family. Type I subfamily. Heterohexadecamer of 8 large chains and 8 small chains.

It is found in the plastid. The protein localises to the chloroplast. The enzyme catalyses 2 (2R)-3-phosphoglycerate + 2 H(+) = D-ribulose 1,5-bisphosphate + CO2 + H2O. It catalyses the reaction D-ribulose 1,5-bisphosphate + O2 = 2-phosphoglycolate + (2R)-3-phosphoglycerate + 2 H(+). Its function is as follows. RuBisCO catalyzes two reactions: the carboxylation of D-ribulose 1,5-bisphosphate, the primary event in carbon dioxide fixation, as well as the oxidative fragmentation of the pentose substrate in the photorespiration process. Both reactions occur simultaneously and in competition at the same active site. This chain is Ribulose bisphosphate carboxylase large chain (rbcL), found in Vicia faba (Broad bean).